The chain runs to 216 residues: Pyrrolidone-carboxylate peptidase (216 aa).

Active-site residues include glutamate 80, cysteine 143, and histidine 168.

Belongs to the peptidase C15 family. As to quaternary structure, homotetramer.

It is found in the cytoplasm. It catalyses the reaction Release of an N-terminal pyroglutamyl group from a polypeptide, the second amino acid generally not being Pro.. In terms of biological role, removes 5-oxoproline from various penultimate amino acid residues except L-proline. This chain is Pyrrolidone-carboxylate peptidase, found in Cupriavidus necator (strain ATCC 17699 / DSM 428 / KCTC 22496 / NCIMB 10442 / H16 / Stanier 337) (Ralstonia eutropha).